The following is a 427-amino-acid chain: Enolase 2 (427 aa).

Gln-165 is a (2R)-2-phosphoglycerate binding site. Catalysis depends on Glu-207, which acts as the Proton donor. Mg(2+) is bound by residues Asp-244, Glu-287, and Asp-314. Residues Lys-339, Arg-368, Ser-369, and Lys-390 each coordinate (2R)-2-phosphoglycerate. Residue Lys-339 is the Proton acceptor of the active site.

Belongs to the enolase family. As to quaternary structure, component of the RNA degradosome, a multiprotein complex involved in RNA processing and mRNA degradation. Mg(2+) is required as a cofactor.

It localises to the cytoplasm. The protein resides in the secreted. The protein localises to the cell surface. The catalysed reaction is (2R)-2-phosphoglycerate = phosphoenolpyruvate + H2O. The protein operates within carbohydrate degradation; glycolysis; pyruvate from D-glyceraldehyde 3-phosphate: step 4/5. In terms of biological role, catalyzes the reversible conversion of 2-phosphoglycerate (2-PG) into phosphoenolpyruvate (PEP). It is essential for the degradation of carbohydrates via glycolysis. In Pseudomonas syringae pv. tomato (strain ATCC BAA-871 / DC3000), this protein is Enolase 2.